A 581-amino-acid polypeptide reads, in one-letter code: Leucine aminopeptidase 3, chloroplastic (581 aa).

The N-terminal 50 residues, Met-1 to Tyr-50, are a transit peptide targeting the chloroplast. Residues Lys-350 and Asp-355 each coordinate Mn(2+). The active site involves Lys-362. 3 residues coordinate Mn(2+): Asp-375, Asp-435, and Glu-437. Arg-439 is a catalytic residue.

It belongs to the peptidase M17 family. In terms of assembly, homohexamer (dimer of homotrimers). It depends on Mn(2+) as a cofactor.

It is found in the plastid. The protein resides in the chloroplast. It carries out the reaction Release of an N-terminal amino acid, Xaa-|-Yaa-, in which Xaa is preferably Leu, but may be other amino acids including Pro although not Arg or Lys, and Yaa may be Pro. Amino acid amides and methyl esters are also readily hydrolyzed, but rates on arylamides are exceedingly low.. The catalysed reaction is Release of N-terminal proline from a peptide.. Its function is as follows. Presumably involved in the processing and regular turnover of intracellular proteins. Catalyzes the removal of unsubstituted N-terminal amino acids from various peptides. Possesses Cys-Gly dipeptidase activity. The sequence is that of Leucine aminopeptidase 3, chloroplastic from Arabidopsis thaliana (Mouse-ear cress).